The chain runs to 594 residues: Elongation factor 4 (594 aa).

The 183-residue stretch at 2–184 (KNIRNFSIIA…TIVAKVPAPE (183 aa)) folds into the tr-type G domain. GTP contacts are provided by residues 14–19 (DHGKST) and 131–134 (NKID).

This sequence belongs to the TRAFAC class translation factor GTPase superfamily. Classic translation factor GTPase family. LepA subfamily.

It is found in the cell inner membrane. The enzyme catalyses GTP + H2O = GDP + phosphate + H(+). Functionally, required for accurate and efficient protein synthesis under certain stress conditions. May act as a fidelity factor of the translation reaction, by catalyzing a one-codon backward translocation of tRNAs on improperly translocated ribosomes. Back-translocation proceeds from a post-translocation (POST) complex to a pre-translocation (PRE) complex, thus giving elongation factor G a second chance to translocate the tRNAs correctly. Binds to ribosomes in a GTP-dependent manner. The sequence is that of Elongation factor 4 from Francisella tularensis subsp. tularensis (strain FSC 198).